The following is a 280-amino-acid chain: 4-diphosphocytidyl-2-C-methyl-D-erythritol kinase (280 aa).

Lysine 11 is a catalytic residue. 95–105 (PVGAGLGGGSS) lines the ATP pocket. The active site involves aspartate 137.

This sequence belongs to the GHMP kinase family. IspE subfamily.

It catalyses the reaction 4-CDP-2-C-methyl-D-erythritol + ATP = 4-CDP-2-C-methyl-D-erythritol 2-phosphate + ADP + H(+). It participates in isoprenoid biosynthesis; isopentenyl diphosphate biosynthesis via DXP pathway; isopentenyl diphosphate from 1-deoxy-D-xylulose 5-phosphate: step 3/6. Catalyzes the phosphorylation of the position 2 hydroxy group of 4-diphosphocytidyl-2C-methyl-D-erythritol. The polypeptide is 4-diphosphocytidyl-2-C-methyl-D-erythritol kinase (Citrifermentans bemidjiense (strain ATCC BAA-1014 / DSM 16622 / JCM 12645 / Bem) (Geobacter bemidjiensis)).